The primary structure comprises 109 residues: Anther-specific protein MZm3-3 (109 aa).

Positions Met1–Ala41 are cleaved as a signal peptide. Intrachain disulfides connect Cys45–Cys86, Cys55–Cys75, Cys76–Cys101, and Cys88–Cys108.

It belongs to the A9/FIL1 family. As to expression, tapetum of anthers.

It is found in the secreted. The sequence is that of Anther-specific protein MZm3-3 from Zea mays (Maize).